We begin with the raw amino-acid sequence, 408 residues long: MKDVLERFLGYIKVDTQSSEESDTVPTTKTQLEFAKKLGEELKAIGLKDVSVDENGYVMATLESNIDKKVPTIGFIAHMDTSPDLSGTNINPRIVEKYDGQDIVLNKEKNIILKINEFPEILEYKGQDIVVTDGNTLLGADDKAGIAEIITAVEYLINHPEIKHGTIKVGFTPDEEVGKGADHFDVKKFGADLAYTLDGGGIGELECETFNAAKAKVIIEGRNVHPGSAKNKMTNAVLVANKFINMLPENEVPERTEGYEGFFHLLSVKSEVETAELNYIIRDFDRKKFEERKEQIKEVGKKINEKYNKEIVCVKVEDQYYNMKEKIDEVKYVVDIAHDAMKAIDIEPILVPIRGGTDGSRLSFMGLPTPNLFAGGHNFHGRFEFVPVLSMEKAAELVVKIAELYANR.

His78 contacts Zn(2+). Asp80 is an active-site residue. Asp141 lines the Zn(2+) pocket. Glu175 acts as the Proton acceptor in catalysis. Residues Glu176, Asp198, and His380 each contribute to the Zn(2+) site.

Belongs to the peptidase M20B family. The cofactor is Zn(2+).

It localises to the cytoplasm. It catalyses the reaction Release of the N-terminal residue from a tripeptide.. Functionally, cleaves the N-terminal amino acid of tripeptides. The polypeptide is Peptidase T (Clostridium botulinum (strain Loch Maree / Type A3)).